A 158-amino-acid chain; its full sequence is Crossover junction endodeoxyribonuclease RuvC (158 aa).

Residues aspartate 7, glutamate 67, and aspartate 139 contribute to the active site. Mg(2+) contacts are provided by aspartate 7, glutamate 67, and aspartate 139.

Belongs to the RuvC family. In terms of assembly, homodimer which binds Holliday junction (HJ) DNA. The HJ becomes 2-fold symmetrical on binding to RuvC with unstacked arms; it has a different conformation from HJ DNA in complex with RuvA. In the full resolvosome a probable DNA-RuvA(4)-RuvB(12)-RuvC(2) complex forms which resolves the HJ. Requires Mg(2+) as cofactor.

It localises to the cytoplasm. It catalyses the reaction Endonucleolytic cleavage at a junction such as a reciprocal single-stranded crossover between two homologous DNA duplexes (Holliday junction).. The RuvA-RuvB-RuvC complex processes Holliday junction (HJ) DNA during genetic recombination and DNA repair. Endonuclease that resolves HJ intermediates. Cleaves cruciform DNA by making single-stranded nicks across the HJ at symmetrical positions within the homologous arms, yielding a 5'-phosphate and a 3'-hydroxyl group; requires a central core of homology in the junction. The consensus cleavage sequence is 5'-(A/T)TT(C/G)-3'. Cleavage occurs on the 3'-side of the TT dinucleotide at the point of strand exchange. HJ branch migration catalyzed by RuvA-RuvB allows RuvC to scan DNA until it finds its consensus sequence, where it cleaves and resolves the cruciform DNA. This Prochlorococcus marinus (strain MIT 9211) protein is Crossover junction endodeoxyribonuclease RuvC.